Consider the following 338-residue polypeptide: tRNA N6-adenosine threonylcarbamoyltransferase (338 aa).

Fe cation-binding residues include H109 and H113. Residues A132–A136, D165, G178, and N277 each bind substrate. Residue D302 coordinates Fe cation.

It belongs to the KAE1 / TsaD family. Fe(2+) serves as cofactor.

Its subcellular location is the cytoplasm. It carries out the reaction L-threonylcarbamoyladenylate + adenosine(37) in tRNA = N(6)-L-threonylcarbamoyladenosine(37) in tRNA + AMP + H(+). In terms of biological role, required for the formation of a threonylcarbamoyl group on adenosine at position 37 (t(6)A37) in tRNAs that read codons beginning with adenine. Is involved in the transfer of the threonylcarbamoyl moiety of threonylcarbamoyl-AMP (TC-AMP) to the N6 group of A37, together with TsaE and TsaB. TsaD likely plays a direct catalytic role in this reaction. The polypeptide is tRNA N6-adenosine threonylcarbamoyltransferase (Chlamydia trachomatis serovar A (strain ATCC VR-571B / DSM 19440 / HAR-13)).